A 423-amino-acid polypeptide reads, in one-letter code: MNILQNLKESDPIISNLINSEKNRQETHLELIASENFASMAVMQAQGSVLTNKYAEGLPQKRYYGGCEFVDEIEELAIERAKQLFDADWANVQPHSGAQANAAVFLSLLKPGDTILGMDLSHGGHLTHGSPVNMSGKWFNAVHYGVDKETNKLNFNEIRDIALATKPKLIICGYSAYPRKIDFESFRRIADEVGAFLMADIAHIAGLVATKLHPNPIPYCDVVTTTTHKTLRGPRGGLILCKDKEFGKKFDKSVFPGTQGGPLEHIIAAKAVAFGEALKPNFVNYSKQVINNAKVLSSTLIKRGIDIVSGGTDNHIVLLDLRSINMTGKVADLLVSEVNITANKNTVPFDPESPFVTSGLRLGTAALTTRGFNDDAFVEVGEIIADRLLNPDDLLTEKKCKERVLTLCNRFPLYEVELEASIK.

Residues Leu-120 and Gly-124–Leu-126 each bind (6S)-5,6,7,8-tetrahydrofolate. Residue Lys-229 is modified to N6-(pyridoxal phosphate)lysine. Ser-353–Phe-355 lines the (6S)-5,6,7,8-tetrahydrofolate pocket.

This sequence belongs to the SHMT family. In terms of assembly, homodimer. Pyridoxal 5'-phosphate serves as cofactor.

It localises to the cytoplasm. The enzyme catalyses (6R)-5,10-methylene-5,6,7,8-tetrahydrofolate + glycine + H2O = (6S)-5,6,7,8-tetrahydrofolate + L-serine. It functions in the pathway one-carbon metabolism; tetrahydrofolate interconversion. The protein operates within amino-acid biosynthesis; glycine biosynthesis; glycine from L-serine: step 1/1. Catalyzes the reversible interconversion of serine and glycine with tetrahydrofolate (THF) serving as the one-carbon carrier. This reaction serves as the major source of one-carbon groups required for the biosynthesis of purines, thymidylate, methionine, and other important biomolecules. Also exhibits THF-independent aldolase activity toward beta-hydroxyamino acids, producing glycine and aldehydes, via a retro-aldol mechanism. This is Serine hydroxymethyltransferase from Prochlorococcus marinus subsp. pastoris (strain CCMP1986 / NIES-2087 / MED4).